We begin with the raw amino-acid sequence, 142 residues long: AP-2 complex subunit sigma (142 aa).

Belongs to the adaptor complexes small subunit family. As to quaternary structure, adaptor protein complex 2 (AP-2) is a heterotetramer composed of two large adaptins (alpha-type and beta-type subunits), a medium adaptin (mu-type subunit AP50) and a small adaptin (sigma-type subunit AP17).

It localises to the cell membrane. The protein localises to the membrane. The protein resides in the coated pit. In terms of biological role, component of the adaptor complexes which link clathrin to receptors in coated vesicles. Clathrin-associated protein complexes are believed to interact with the cytoplasmic tails of membrane proteins, leading to their selection and concentration. The sequence is that of AP-2 complex subunit sigma (ap2s1) from Dictyostelium discoideum (Social amoeba).